A 271-amino-acid chain; its full sequence is Aquaporin-1 (271 aa).

Topologically, residues 1-11 are cytoplasmic; the sequence is MASEFKKKLFW. The chain crosses the membrane as a helical span at residues 12–29; sequence RAVVAEFLAMILFVFISI. The Extracellular portion of the chain corresponds to 30–48; that stretch reads GSALGFNYPVRNNQTAGAA. N-linked (GlcNAc...) asparagine glycosylation is present at Asn-42. The chain crosses the membrane as a helical span at residues 49-67; that stretch reads QDNVKVSLAFGLSIATLAQ. The Cytoplasmic segment spans residues 68 to 70; sequence SVG. The stretch at 71 to 84 is an intramembrane region; it reads HISGAHLNPAVTLG. The NPA 1 motif lies at 78–80; sequence NPA. Topologically, residues 85 to 92 are cytoplasmic; that stretch reads LLLSCQIS. The helical transmembrane segment at 93-111 threads the bilayer; that stretch reads ILRAVMYIIAQCVGAIVAT. Topologically, residues 112–135 are extracellular; it reads AILSGITSSLPDNSLGRNELAPGV. The chain crosses the membrane as a helical span at residues 136 to 155; it reads NSGQGLGIEIIGTLQLVLCV. The Cytoplasmic portion of the chain corresponds to 156–165; sequence LATTDRRRRD. Residues 166 to 183 traverse the membrane as a helical segment; it reads LGGSGPLAIGLSVALGHL. The Extracellular portion of the chain corresponds to 184–188; it reads LAIDY. Residues 189 to 201 lie within the membrane without spanning it; sequence TGCGINPARSFGS. The short motif at 194 to 196 is the NPA 2 element; that stretch reads NPA. Topologically, residues 202-208 are extracellular; that stretch reads SVITHNF. The chain crosses the membrane as a helical span at residues 209–226; sequence KDHWIFWVGPFIGGALAV. Residues 227–271 lie on the Cytoplasmic side of the membrane; sequence LIYDFILAPRSSDLTDRVKVWTSGQVEEYELDGDDINSRVEMKPK. At Ser-249 the chain carries Phosphoserine. The residue at position 255 (Tyr-255) is a Phosphotyrosine. Phosphoserine is present on Ser-264.

It belongs to the MIP/aquaporin (TC 1.A.8) family. As to quaternary structure, homotetramer; each monomer provides an independent water pore. Component of the ankyrin-1 complex in the erythrocyte, composed of ANK1, RHCE, RHAG, SLC4A1, EPB42, GYPA, GYPB and AQP1. Interacts with EPHB2; involved in endolymph production in the inner ear. Identified in a complex with STOM. Interacts (via the N-terminal) with ANK1 (via ANK 1-5 repeats). Interacts (via the C-terminal) with EPB42.

It localises to the cell membrane. It carries out the reaction H2O(in) = H2O(out). It catalyses the reaction nitric oxide(out) = nitric oxide(in). The catalysed reaction is CO2(out) = CO2(in). The enzyme catalyses glycerol(in) = glycerol(out). It carries out the reaction H2O2(out) = H2O2(in). It catalyses the reaction K(+)(in) = K(+)(out). The catalysed reaction is Na(+)(in) = Na(+)(out). In terms of biological role, forms a water channel that facilitates the transport of water across cell membranes, playing a crucial role in water homeostasis in various tissues. Could also be permeable to small solutes including hydrogen peroxide, glycerol and gases such as amonnia (NH3), nitric oxide (NO) and carbon dioxide (CO2). Recruited to the ankyrin-1 complex, a multiprotein complex of the erythrocyte membrane, it could be part of a CO2 metabolon, linking facilitated diffusion of CO2 across the membrane, anion exchange of Cl(-)/HCO3(-) and interconversion of dissolved CO2 and carbonic acid in the cytosol. In vitro, it shows non-selective gated cation channel activity and may be permeable to cations like K(+) and Na(+) in vivo. The sequence is that of Aquaporin-1 from Canis lupus familiaris (Dog).